The sequence spans 268 residues: Tryptophan synthase alpha chain (268 aa).

Residues Glu49 and Asp60 each act as proton acceptor in the active site.

This sequence belongs to the TrpA family. Tetramer of two alpha and two beta chains.

The enzyme catalyses (1S,2R)-1-C-(indol-3-yl)glycerol 3-phosphate + L-serine = D-glyceraldehyde 3-phosphate + L-tryptophan + H2O. It functions in the pathway amino-acid biosynthesis; L-tryptophan biosynthesis; L-tryptophan from chorismate: step 5/5. In terms of biological role, the alpha subunit is responsible for the aldol cleavage of indoleglycerol phosphate to indole and glyceraldehyde 3-phosphate. This chain is Tryptophan synthase alpha chain, found in Salmonella typhimurium (strain LT2 / SGSC1412 / ATCC 700720).